Consider the following 186-residue polypeptide: TATA-box-binding protein F (186 aa).

2 repeat units span residues Ile-10–Leu-86 and Val-101–Leu-179.

This sequence belongs to the TBP family.

Its function is as follows. General factor that plays a role in the activation of archaeal genes transcribed by RNA polymerase. Binds specifically to the TATA box promoter element which lies close to the position of transcription initiation. The chain is TATA-box-binding protein F (tbpF) from Halobacterium salinarum (strain ATCC 700922 / JCM 11081 / NRC-1) (Halobacterium halobium).